A 178-amino-acid polypeptide reads, in one-letter code: uncharacterized protein (178 aa).

The N-acetyltransferase domain occupies 9–173; that stretch reads LTLRKMELED…IDVYMFSLLK (165 aa).

This is an uncharacterized protein from Bacillus licheniformis.